A 261-amino-acid polypeptide reads, in one-letter code: Chanoclavine-I dehydrogenase ifgE (261 aa).

An N-terminal signal peptide occupies residues 1–20 (MASVKSRVFAITGGASGIGA). Isoleucine 18, lysine 48, aspartate 66, arginine 132, tyrosine 166, lysine 170, and threonine 201 together coordinate NADP(+). Tyrosine 166 serves as the catalytic Proton acceptor. Catalysis depends on lysine 170, which acts as the Lowers pKa of active site Tyr.

Belongs to the short-chain dehydrogenases/reductases (SDR) family.

It participates in alkaloid biosynthesis; ergot alkaloid biosynthesis. In terms of biological role, chanoclavine-I dehydrogenase; part of the gene cluster that mediates the biosynthesis of isofumigaclavines, fungal ergot alkaloids. The tryptophan dimethylallyltransferase ifgA catalyzes the first step of ergot alkaloid biosynthesis by condensing dimethylallyl diphosphate (DMAP) and tryptophan to form 4-dimethylallyl-L-tryptophan. The second step is catalyzed by the methyltransferase ifgB that methylates 4-dimethylallyl-L-tryptophan in the presence of S-adenosyl-L-methionine, resulting in the formation of N-methyl-dimethylallyl-L-tryptophan. The catalase ifgD and the FAD-dependent oxidoreductase ifgC then transform N-methyl-dimethylallyl-L-tryptophan to chanoclavine-I which is further oxidized by ifgE in the presence of NAD(+), resulting in the formation of chanoclavine-I aldehyde. The chanoclavine-I aldehyde reductases ifgG and/or fgaOx3 reduce chanoclavine-I aldehyde to dihydrochanoclavine-I aldehyde that spontaneously dehydrates to form 6,8-dimethyl-6,7-didehydroergoline. The festuclavine dehydrogenases ifgF1 and/or ifgF2 then catalyze the reduction of 6,8-dimethyl-6,7-didehydroergoline to form festuclavine. Hydrolysis of festuclavine by a yet undetermined cytochrome P450 monooxygenase (called ifgH) then leads to the formation of isofumigaclavine B which is in turn acetylated by ifgI to isofumigaclavine A. Penicillium roqueforti has interestingly at least two sets of genes for the consumption of chanoclavine-I aldehyde on three different loci, the OYEs ifgG/fgaOx3 and the festuclavine synthase homologs ifgF1/ifgF2. The reason for the duplication of these genes is unclear, probably to ensure the conversion of chanoclavine-I aldehyde by differential gene expression under various environmental conditions. The sequence is that of Chanoclavine-I dehydrogenase ifgE from Penicillium roqueforti (strain FM164).